The following is a 270-amino-acid chain: Proteasome inhibitor PI31 subunit (270 aa).

A2 is modified (N-acetylalanine). The interval A2–N150 is important for homodimerization and interaction with FBXO7. S152 carries the post-translational modification Phosphoserine. R204 is subject to Omega-N-methylarginine. Position 218 is an asymmetric dimethylarginine (R218). The tract at residues L220 to L270 is disordered. R230 is modified (omega-N-methylarginine). S251 is modified (phosphoserine). The segment covering G254–G264 has biased composition (pro residues).

Belongs to the proteasome inhibitor PI31 family. In terms of assembly, monomer and homodimer. Interacts with FBXO7.

The protein localises to the cytoplasm. Its subcellular location is the endoplasmic reticulum. Plays an important role in control of proteasome function. Inhibits the hydrolysis of protein and peptide substrates by the 20S proteasome. Also inhibits the activation of the proteasome by the proteasome regulatory proteins PA700 and PA28. This Bos taurus (Bovine) protein is Proteasome inhibitor PI31 subunit (PSMF1).